Consider the following 98-residue polypeptide: NADH-ubiquinone oxidoreductase chain 4L (98 aa).

Helical transmembrane passes span 1–21 (MSLTYMNMFMAFTISLLGLLM), 29–49 (SLLCLEGMMLSLFVMMTITIL), and 61–81 (IILLVFAACEAALGLSLLVMV).

The protein belongs to the complex I subunit 4L family. As to quaternary structure, core subunit of respiratory chain NADH dehydrogenase (Complex I) which is composed of 45 different subunits.

It localises to the mitochondrion inner membrane. It carries out the reaction a ubiquinone + NADH + 5 H(+)(in) = a ubiquinol + NAD(+) + 4 H(+)(out). Core subunit of the mitochondrial membrane respiratory chain NADH dehydrogenase (Complex I) which catalyzes electron transfer from NADH through the respiratory chain, using ubiquinone as an electron acceptor. Part of the enzyme membrane arm which is embedded in the lipid bilayer and involved in proton translocation. In Artibeus jamaicensis (Jamaican fruit-eating bat), this protein is NADH-ubiquinone oxidoreductase chain 4L (MT-ND4L).